The sequence spans 150 residues: Large ribosomal subunit protein uL15 (150 aa).

Residues 1-57 (MRLEDIRPQAGSTRRRRRLGRGVSAGQGASCGKGMRGQKARKGGSTRPGFEGGQTPL) form a disordered region. A compositionally biased stretch (gly residues) spans 23 to 35 (VSAGQGASCGKGM).

The protein belongs to the universal ribosomal protein uL15 family. As to quaternary structure, part of the 50S ribosomal subunit.

In terms of biological role, binds to the 23S rRNA. The protein is Large ribosomal subunit protein uL15 of Synechococcus sp. (strain JA-2-3B'a(2-13)) (Cyanobacteria bacterium Yellowstone B-Prime).